A 161-amino-acid polypeptide reads, in one-letter code: MTESKAVIPGSFDPITYGHMDIIERVAQRFDEIHICVLKNSNKEGTFTVEERMALIEASVADIPNVEVHQFNGLLVDFCDEVGAKTIIRGLRAVSDFEYELRLTSMNKKLNSDVETLYMMTSTNYSFISSSVVKEVAQYKADISEFVPEPVEKALKEKFGK.

S11 is a substrate binding site. ATP-binding positions include 11-12 (SF) and H19. Substrate contacts are provided by K43, L75, and R89. ATP is bound by residues 90 to 92 (GLR), E100, and 125 to 131 (YSFISSS).

It belongs to the bacterial CoaD family. Homohexamer. It depends on Mg(2+) as a cofactor.

It localises to the cytoplasm. It carries out the reaction (R)-4'-phosphopantetheine + ATP + H(+) = 3'-dephospho-CoA + diphosphate. It participates in cofactor biosynthesis; coenzyme A biosynthesis; CoA from (R)-pantothenate: step 4/5. In terms of biological role, reversibly transfers an adenylyl group from ATP to 4'-phosphopantetheine, yielding dephospho-CoA (dPCoA) and pyrophosphate. This Staphylococcus carnosus (strain TM300) protein is Phosphopantetheine adenylyltransferase.